We begin with the raw amino-acid sequence, 159 residues long: RNA pyrophosphohydrolase (159 aa).

The 144-residue stretch at 6 to 149 (GFRPNVGIIL…KREVYRRALK (144 aa)) folds into the Nudix hydrolase domain. The short motif at 38 to 59 (GGINDRESPEEALYRELNEEVG) is the Nudix box element.

The protein belongs to the Nudix hydrolase family. RppH subfamily. The cofactor is a divalent metal cation.

Functionally, accelerates the degradation of transcripts by removing pyrophosphate from the 5'-end of triphosphorylated RNA, leading to a more labile monophosphorylated state that can stimulate subsequent ribonuclease cleavage. This is RNA pyrophosphohydrolase from Ectopseudomonas mendocina (strain ymp) (Pseudomonas mendocina).